Consider the following 54-residue polypeptide: UPF0391 membrane protein Rmet_0093 (54 aa).

The next 2 helical transmembrane spans lie at 5–25 (ALVF…GIAA) and 30–50 (IAKI…VMGL).

This sequence belongs to the UPF0391 family.

The protein resides in the cell membrane. This is UPF0391 membrane protein Rmet_0093 from Cupriavidus metallidurans (strain ATCC 43123 / DSM 2839 / NBRC 102507 / CH34) (Ralstonia metallidurans).